The following is a 476-amino-acid chain: Glutamate--tRNA ligase (476 aa).

Residues 9–19 (PSPTGTLHLGT) carry the 'HIGH' region motif. The 'KMSKS' region signature appears at 248-252 (KLSKR). An ATP-binding site is contributed by K251.

This sequence belongs to the class-I aminoacyl-tRNA synthetase family. Glutamate--tRNA ligase type 1 subfamily. Monomer.

It is found in the cytoplasm. It carries out the reaction tRNA(Glu) + L-glutamate + ATP = L-glutamyl-tRNA(Glu) + AMP + diphosphate. Catalyzes the attachment of glutamate to tRNA(Glu) in a two-step reaction: glutamate is first activated by ATP to form Glu-AMP and then transferred to the acceptor end of tRNA(Glu). The protein is Glutamate--tRNA ligase of Prochlorococcus marinus (strain NATL2A).